Consider the following 40-residue polypeptide: Muscarinic m1-toxin3 (40 aa).

An intrachain disulfide couples Cys-3 to Cys-24.

The protein belongs to the three-finger toxin family. Short-chain subfamily. Aminergic toxin sub-subfamily. In terms of assembly, monomer. Contains 4 disulfide bonds. As to expression, expressed by the venom gland.

It localises to the secreted. Its function is as follows. Binds irreversibly and specifically to M1 (CHRM1) muscarinic acetylcholine receptors, blocking further binding of antagonists and preventing the action of agonists. In Dendroaspis angusticeps (Eastern green mamba), this protein is Muscarinic m1-toxin3.